We begin with the raw amino-acid sequence, 90 residues long: Small ribosomal subunit protein uS15c (90 aa).

It belongs to the universal ribosomal protein uS15 family. As to quaternary structure, part of the 30S ribosomal subunit.

Its subcellular location is the plastid. The protein localises to the chloroplast. The polypeptide is Small ribosomal subunit protein uS15c (rps15) (Citrus sinensis (Sweet orange)).